The following is a 254-amino-acid chain: 5'-nucleotidase SurE (254 aa).

A divalent metal cation is bound by residues Asp8, Asp9, Ser40, and Asn93.

Belongs to the SurE nucleotidase family. Requires a divalent metal cation as cofactor.

The protein localises to the cytoplasm. The enzyme catalyses a ribonucleoside 5'-phosphate + H2O = a ribonucleoside + phosphate. Nucleotidase that shows phosphatase activity on nucleoside 5'-monophosphates. The chain is 5'-nucleotidase SurE from Methylobacterium radiotolerans (strain ATCC 27329 / DSM 1819 / JCM 2831 / NBRC 15690 / NCIMB 10815 / 0-1).